A 602-amino-acid polypeptide reads, in one-letter code: Cholinesterase (602 aa).

The first 28 residues, 1–28, serve as a signal peptide directing secretion; sequence MQSKGTIISIQFLLRFLLLWVLIGKSHT. An N-linked (GlcNAc...) asparagine glycan is attached at N85. C93 and C120 are joined by a disulfide. N134 is a glycosylation site (N-linked (GlcNAc...) asparagine). 144-145 is a binding site for substrate; sequence GG. S226 serves as the catalytic Acyl-ester intermediate. S226 bears the Phosphoserine mark. N269 and N284 each carry an N-linked (GlcNAc...) asparagine glycan. A disulfide bridge connects residues C280 and C291. E353 (charge relay system) is an active-site residue. A glycan (N-linked (GlcNAc...) asparagine) is linked at N369. A disulfide bridge links C428 with C547. H466 functions as the Charge relay system in the catalytic mechanism. N483, N509, N513, and N514 each carry an N-linked (GlcNAc...) asparagine glycan.

This sequence belongs to the type-B carboxylesterase/lipase family. Homotetramer; disulfide-linked. Dimer of dimers.

The protein resides in the secreted. The catalysed reaction is an acylcholine + H2O = a carboxylate + choline + H(+). Its function is as follows. Esterase with broad substrate specificity. Contributes to the inactivation of the neurotransmitter acetylcholine. Can degrade neurotoxic organophosphate esters. The sequence is that of Cholinesterase (BCHE) from Felis catus (Cat).